The following is a 789-amino-acid chain: Alpha-glucosidase 2 (789 aa).

Disordered stretches follow at residues 1 to 24 (MTGL…PRVI) and 512 to 531 (ELNP…ASHP). The active-site Proton donor is D523. Residue E756 is the Proton acceptor of the active site.

Belongs to the glycosyl hydrolase 63 family.

It participates in glycan metabolism; N-glycan degradation. The polypeptide is Alpha-glucosidase 2 (GCS2) (Arabidopsis thaliana (Mouse-ear cress)).